We begin with the raw amino-acid sequence, 151 residues long: UPF0756 membrane protein Dred_1676 (151 aa).

A run of 4 helical transmembrane segments spans residues 9–29 (VILLLIGLVAQSNLIAICASV), 47–67 (THGLELGLLFLLLSILVPIAT), 75–95 (LLYNVSSLPGFLSIVGGILAT), and 111–131 (IIFGLIVGSVIGIIFFNGQPV).

The protein belongs to the UPF0756 family.

It is found in the cell membrane. The sequence is that of UPF0756 membrane protein Dred_1676 from Desulforamulus reducens (strain ATCC BAA-1160 / DSM 100696 / MI-1) (Desulfotomaculum reducens).